A 455-amino-acid polypeptide reads, in one-letter code: tRNA modification GTPase MnmE (455 aa).

Positions 26, 86, and 125 each coordinate (6S)-5-formyl-5,6,7,8-tetrahydrofolate. Residues 222–376 (GLKTAIIGRP…VEEKINQIFF (155 aa)) enclose the TrmE-type G domain. Position 232 (N232) interacts with K(+). Residues 232-237 (NVGKSS), 251-257 (TDIAGTT), and 276-279 (DTAG) each bind GTP. A Mg(2+)-binding site is contributed by S236. Residues T251, I253, and T256 each contribute to the K(+) site. T257 provides a ligand contact to Mg(2+). Position 455 (K455) interacts with (6S)-5-formyl-5,6,7,8-tetrahydrofolate.

The protein belongs to the TRAFAC class TrmE-Era-EngA-EngB-Septin-like GTPase superfamily. TrmE GTPase family. In terms of assembly, homodimer. Heterotetramer of two MnmE and two MnmG subunits. K(+) is required as a cofactor.

It localises to the cytoplasm. Its function is as follows. Exhibits a very high intrinsic GTPase hydrolysis rate. Involved in the addition of a carboxymethylaminomethyl (cmnm) group at the wobble position (U34) of certain tRNAs, forming tRNA-cmnm(5)s(2)U34. This is tRNA modification GTPase MnmE from Lactococcus lactis subsp. cremoris (strain SK11).